A 43-amino-acid polypeptide reads, in one-letter code: Protein PsbN (43 aa).

Residues 5-27 (TLVAIPISCLLVSFTGYALYTAF) form a helical membrane-spanning segment.

The protein belongs to the PsbN family.

The protein resides in the plastid. It localises to the chloroplast thylakoid membrane. Its function is as follows. May play a role in photosystem I and II biogenesis. This Sphagnum cuspidatum (Bog moss) protein is Protein PsbN.